The chain runs to 140 residues: Translation initiation factor 2 subunit beta (140 aa).

It belongs to the eIF-2-beta/eIF-5 family. Heterotrimer composed of an alpha, a beta and a gamma chain.

EIF-2 functions in the early steps of protein synthesis by forming a ternary complex with GTP and initiator tRNA. The protein is Translation initiation factor 2 subunit beta (eif2b) of Pyrococcus abyssi (strain GE5 / Orsay).